We begin with the raw amino-acid sequence, 263 residues long: Pyrroline-5-carboxylate reductase (263 aa).

The protein belongs to the pyrroline-5-carboxylate reductase family.

The protein localises to the cytoplasm. The enzyme catalyses L-proline + NADP(+) = (S)-1-pyrroline-5-carboxylate + NADPH + 2 H(+). It carries out the reaction L-proline + NAD(+) = (S)-1-pyrroline-5-carboxylate + NADH + 2 H(+). It participates in amino-acid biosynthesis; L-proline biosynthesis; L-proline from L-glutamate 5-semialdehyde: step 1/1. In terms of biological role, catalyzes the reduction of 1-pyrroline-5-carboxylate (PCA) to L-proline. In Treponema pallidum (strain Nichols), this protein is Pyrroline-5-carboxylate reductase.